We begin with the raw amino-acid sequence, 154 residues long: Ribonuclease H (154 aa).

Positions K7–A148 constitute an RNase H type-1 domain. Mg(2+) contacts are provided by D16, E54, D76, and D140.

This sequence belongs to the RNase H family. As to quaternary structure, monomer. Mg(2+) is required as a cofactor.

The protein resides in the cytoplasm. It carries out the reaction Endonucleolytic cleavage to 5'-phosphomonoester.. Its function is as follows. Endonuclease that specifically degrades the RNA of RNA-DNA hybrids. The polypeptide is Ribonuclease H (Paramagnetospirillum magneticum (strain ATCC 700264 / AMB-1) (Magnetospirillum magneticum)).